The following is a 1588-amino-acid chain: Ubiquitin carboxyl-terminal hydrolase 54 (1588 aa).

Arg-12 is subject to Omega-N-methylarginine. In terms of domain architecture, USP spans 31 to 352 (KGLSNEPGQN…QPLLLLYADP (322 aa)). Cys-42 (nucleophile) is an active-site residue. 12 residues coordinate Zn(2+): His-67, Cys-69, Cys-74, Cys-77, His-133, Cys-145, Cys-150, His-153, Cys-166, Cys-169, Cys-225, and Cys-229. The active-site Proton acceptor is the His-302. Basic and acidic residues-rich tracts occupy residues 380–391 (DSGHLTDSECNQ) and 424–434 (SEGETLKEKQA). Disordered stretches follow at residues 380–447 (DSGH…TSRL) and 459–519 (HSRP…PTWR). At Ser-424 the chain carries Phosphoserine. 2 stretches are compositionally biased toward polar residues: residues 436-445 (RNASKSSSTS) and 459-471 (HSRPSLASQTNAA). Low complexity predominate over residues 499 to 512 (TESTSSEARSSSSS). 3 positions are modified to phosphoserine: Ser-574, Ser-613, and Ser-616. The span at 601–616 (ESGYESSERNSSSPVS) shows a compositional bias: low complexity. The tract at residues 601 to 620 (ESGYESSERNSSSPVSLDAA) is disordered. Positions 678 to 712 (TSKSELDELQEEVARRAQEQELRKKREKELEAAKG) form a coiled coil. Disordered regions lie at residues 801 to 839 (RSLQDRMQQQPPSQQPVQPSASLPSQGGGLPQPTSEQSV), 856 to 895 (DSELGATSPFFHSPASCPEPHSSLVSPSPAQSVSQHSPPG), 950 to 969 (EDNSCCSKFPPQEGRDTTQD), 1093 to 1172 (TRDV…SRRR), and 1525 to 1562 (GSVLGSRTPGPRRIDVPPDDDGRQSQYPSQYRHRSAGE). Low complexity predominate over residues 808-825 (QQQPPSQQPVQPSASLPS). Residues 878–895 (SLVSPSPAQSVSQHSPPG) show a composition bias toward polar residues. Ser-1138 bears the Phosphoserine mark. Residues 1536–1547 (RRIDVPPDDDGR) show a composition bias toward basic and acidic residues.

The protein belongs to the peptidase C19 family.

The catalysed reaction is Thiol-dependent hydrolysis of ester, thioester, amide, peptide and isopeptide bonds formed by the C-terminal Gly of ubiquitin (a 76-residue protein attached to proteins as an intracellular targeting signal).. Its function is as follows. Deubiquitinase that specifically mediates 'Lys-63'-linked deubiquitination of substrates with a polyubiquitin chain composed of at least 3 ubiquitins. Specifically recognizes ubiquitin chain in position S2 and catalyzes cleavage of polyubiquitin within 'Lys-63'-linked chains. Not able to deubiquitinate substrates with shorter ubiquitin chains. Mediates deubiquitination of PLK4, maintaining PLK4 stability by reducing its ubiquitination-mediated degradation. This is Ubiquitin carboxyl-terminal hydrolase 54 (Usp54) from Rattus norvegicus (Rat).